A 1203-amino-acid polypeptide reads, in one-letter code: MEQAPNMAEPRGPVDHGVQIRFITEPVSGAEMGTLRRGGRRPAKDARASTYGVAVRVQGIAGQPFVVLNSGEKGGDSFGVQIKGANDQEASGALGSDFELPENPYSQVKGFPAPSQSSTSDEEPGAYWNGKLLRSQSQASLAGPGPMDPSNRSTSMLELAPKVASPGSTIDTAPLSSVDSLINKFDSQLGGQSRGRTGRRTRMLPPEQRKRSKSLDSRLPRDTLEERERQSTNHWTPSTKYDNHVGSSKQPSQSQSPSPPSGFSRSRQTQDWVLQSFEEPRGRAQDPTMLQFKSTPDLLRDQQEAAPPGSVDHMKATIYGILREGSSESETSVRRKVSLVLEKMQPLVMISSGSTKAVAGQGELTRKVEELQRKLDEEVKRRQKLEPSRVGLERQLEEKTEECSRLQELLERRKGEAQQSNKELQNMKRLLDQGEGLRHGLEAQVMELQNKLKQVQGPEPAKEVLLKDLLETRELLEEVLEGKQRVEEQLRLRERELTALKGALKEEVASRDQEVEHVRQQYQRDTEQLRRSMQDATQDHAVLEAERQKMSALVRGLQRELEETSEETGHWQSMFQKNKEDLRATKQELLQLRMEKEEMEEELGEKIEVLQRELEQARASAGDTRQVEVLKKELLQTQEELKELQAERQSQEVAGRHRDRELEKQLAVLRVEADRGRELEEQNLQLQKTLQQLRQDCEEASKAKMVAEAEAAVLGQRRAAVETTLRETQEENDEFRRRILGLEQQLKETRGLVDGGEAVEARLRDKLQRLEAEKQQLEEALNASQEEEGSLAAAKRALEARLEEAQRGLARLGQEQQTLNRALEEEGKQREVLRRGKAELEEQKHLLDRTVDRLNKELEKIGEDSKQALQQLQAQLDDYKEKARREVADAQRQAKDWASEAEKTSGGLSRLQDEIQRLRQALQASQAERDTARLDKELLAQRLQGLEQEAENKKRSQDDRARQLKGLEEKVSRLEAELDEEKNTVELLTDRVNRGRDQVDQLRTELLQERSARQDLECDKISLERQNKDLKTRLASSEGFQKPSASLSQLESQNQLLQERLQAEEREKTVLQSTNRKLERKVKELSIQIEDERQHVNDQKDQLSLRVKALKRQVDEAEEEIERLDGLRKKAQRELEEQHEVNEQLQARIKSLEKDSWRKASRSAAESALKHEGLSSDEEFDSVYDPSSIASLLTESNLQTSSC.

Residues 7–357 (MAEPRGPVDH…VMISSGSTKA (351 aa)) are head. The segment at 25-48 (EPVSGAEMGTLRRGGRRPAKDARA) is disordered. A ZIM motif is present at residues 48 to 62 (ASTYGVAVRVQGIAG). The segment at 54 to 67 (AVRVQGIAGQPFVV) is interaction with TJP1/ZO1. The disordered stretch occupies residues 89–268 (EASGALGSDF…PPSGFSRSRQ (180 aa)). 6 positions are modified to phosphoserine: Ser-96, Ser-135, Ser-137, Ser-140, Ser-155, and Ser-165. Residues 166 to 191 (PGSTIDTAPLSSVDSLINKFDSQLGG) show a composition bias toward polar residues. Basic and acidic residues predominate over residues 207-231 (EQRKRSKSLDSRLPRDTLEERERQS). Residues Ser-214, Ser-217, Ser-258, Ser-276, Ser-338, and Ser-351 each carry the phosphoserine modification. The segment covering 246 to 267 (GSSKQPSQSQSPSPPSGFSRSR) has biased composition (low complexity). The stretch at 358 to 1160 (VAGQGELTRK…SLEKDSWRKA (803 aa)) forms a coiled coil. N6-acetyllysine is present on Lys-579. Residues 883-903 (ARREVADAQRQAKDWASEAEK) are compositionally biased toward basic and acidic residues. Disordered stretches follow at residues 883–908 (ARREVADAQRQAKDWASEAEKTSGGL) and 1160–1181 (ASRSAAESALKHEGLSSDEEFD). The segment at 1161–1203 (SRSAAESALKHEGLSSDEEFDSVYDPSSIASLLTESNLQTSSC) is tail. Ser-1175, Ser-1176, and Ser-1182 each carry phosphoserine.

This sequence belongs to the cingulin family. In terms of assembly, homodimer. Interacts with TJP1/ZO1 and SPEF1.

The protein localises to the cell junction. It localises to the tight junction. Its function is as follows. Probably plays a role in the formation and regulation of the tight junction (TJ) paracellular permeability barrier. This chain is Cingulin, found in Papio anubis (Olive baboon).